Consider the following 231-residue polypeptide: MEQKTAPTQYEVKVQYNNSILNYAIDHSDQLTDIQKELIQFTKENIERHIMLTQAEQCSFFKLLIQVLNAKKTIDIGVFTGLSSLTAALAMGDEGRVVACDVSTEYTQHALKFWAKAGVDHKINLKIQPASKTLQELIDQGEENTYDFVFIDADKTGYDTYYELSLKLIRKGGIIAIDNVLQHGRVADPNANVEPNLVAIRALNDKILADKRVTKSLLPIADGITLITKIN.

Residues threonine 53, aspartate 75, 77-78 (GV), serine 83, aspartate 101, alanine 130, aspartate 152, aspartate 154, and tyrosine 161 each bind S-adenosyl-L-methionine. Aspartate 152 is an a divalent metal cation binding site. A divalent metal cation-binding residues include aspartate 178 and asparagine 179.

This sequence belongs to the class I-like SAM-binding methyltransferase superfamily. Cation-dependent O-methyltransferase family. CCoAMT subfamily.

It catalyses the reaction (E)-caffeoyl-CoA + S-adenosyl-L-methionine = (E)-feruloyl-CoA + S-adenosyl-L-homocysteine + H(+). The polypeptide is Probable caffeoyl-CoA O-methyltransferase 2 (omt6) (Dictyostelium discoideum (Social amoeba)).